We begin with the raw amino-acid sequence, 207 residues long: MIIIAYLLGSIQTGLWIGKYFYQVNLRQHGSGNTGTTNTFRILGVKAGIVTLTIDILKGTLATLIPIILGITTISPFFIGFFAIIGHTFPIFAQFKGGKAVATSAGVLLGFAPSFFLYLLVIFLLTLYLFSMISLSSITVAVVGILSVLIFPLVGFILTDYDWIFTTVVILMALTIIIRHQDNIKRIRKRQENLVPFGLNLSKQKNK.

The next 6 membrane-spanning stretches (helical) occupy residues 1 to 21 (MIII…GKYF), 42 to 62 (ILGV…GTLA), 65 to 85 (IPII…FAII), 105 to 125 (AGVL…IFLL), 138 to 158 (ITVA…GFIL), and 159 to 179 (TDYD…IIIR).

Belongs to the PlsY family. As to quaternary structure, probably interacts with PlsX.

The protein resides in the cell membrane. The catalysed reaction is an acyl phosphate + sn-glycerol 3-phosphate = a 1-acyl-sn-glycero-3-phosphate + phosphate. It participates in lipid metabolism; phospholipid metabolism. Catalyzes the transfer of an acyl group from acyl-phosphate (acyl-PO(4)) to glycerol-3-phosphate (G3P) to form lysophosphatidic acid (LPA). This enzyme utilizes acyl-phosphate as fatty acyl donor, but not acyl-CoA or acyl-ACP. In Streptococcus agalactiae serotype Ia (strain ATCC 27591 / A909 / CDC SS700), this protein is Glycerol-3-phosphate acyltransferase.